The primary structure comprises 454 residues: Sensor histidine kinase RppB (454 aa).

Residues 1 to 13 (MNTRRLFARSRLQ) lie on the Periplasmic side of the membrane. Residues 14–34 (LAFWYALVMGGILTLLGLGVY) form a helical membrane-spanning segment. Residues 35 to 186 (RAIVQANWMA…LAAFDAENKR (152 aa)) are Cytoplasmic-facing. A helical transmembrane segment spans residues 187-207 (ILWILGLSFPIALGLVAFSSW). Over 208–454 (GLAGLAMRPI…PIFSVPIVHS (247 aa)) the chain is Periplasmic. The region spanning 230 to 448 (NAAHELRSPL…LFTIQLPIFS (219 aa)) is the Histidine kinase domain. Histidine 233 bears the Phosphohistidine; by autocatalysis mark.

Its subcellular location is the cell inner membrane. It carries out the reaction ATP + protein L-histidine = ADP + protein N-phospho-L-histidine.. Its function is as follows. Member of two-component regulatory system RppA/RppB, involved in the establishment of the appropriate stoichiometry between the 2 photosystems. It senses changes in the plastoquinone (PQ) redox poise. Another group shows this two-component pair, renamed NrsR/NrsS, controls the nickel-dependent expression of the nrsBACD operon; they suggest the photosystem-related activities seen earlier are due to the expression of NrsS (RppB) in the absence of its natural substrate NrsR (RppA). The sequence is that of Sensor histidine kinase RppB from Synechocystis sp. (strain ATCC 27184 / PCC 6803 / Kazusa).